Reading from the N-terminus, the 374-residue chain is Hydroxylysine kinase (374 aa).

Asp228 (proton acceptor) is an active-site residue.

This sequence belongs to the aminoglycoside phosphotransferase family.

It is found in the cytoplasm. It carries out the reaction (5R)-5-hydroxy-L-lysine + GTP = (5R)-5-phosphooxy-L-lysine + GDP + H(+). In terms of biological role, catalyzes the GTP-dependent phosphorylation of 5-hydroxy-L-lysine. In Xenopus laevis (African clawed frog), this protein is Hydroxylysine kinase (hykk).